The sequence spans 269 residues: Energy-coupling factor transporter ATP-binding protein EcfA1 (269 aa).

The ABC transporter domain occupies 8–242 (ITFNHVRFKY…GDGLTEIGLD (235 aa)). 42–49 (GHNGSGKS) contacts ATP.

This sequence belongs to the ABC transporter superfamily. Energy-coupling factor EcfA family. In terms of assembly, forms a stable energy-coupling factor (ECF) transporter complex composed of 2 membrane-embedded substrate-binding proteins (S component), 2 ATP-binding proteins (A component) and 2 transmembrane proteins (T component).

It localises to the cell membrane. Its function is as follows. ATP-binding (A) component of a common energy-coupling factor (ECF) ABC-transporter complex. Unlike classic ABC transporters this ECF transporter provides the energy necessary to transport a number of different substrates. This is Energy-coupling factor transporter ATP-binding protein EcfA1 from Staphylococcus saprophyticus subsp. saprophyticus (strain ATCC 15305 / DSM 20229 / NCIMB 8711 / NCTC 7292 / S-41).